A 722-amino-acid polypeptide reads, in one-letter code: D-(-)-3-hydroxybutyrate oligomer hydrolase (722 aa).

Residues 1-11 show a composition bias toward polar residues; sequence MQQRHLSQSAH. Positions 1–20 are disordered; the sequence is MQQRHLSQSAHSHGHGTRRA. Positions 1–36 are cleaved as a signal peptide; the sequence is MQQRHLSQSAHSHGHGTRRAHRRNTIAIAVATLAVA. Ser-327 acts as the Charge relay system in catalysis. The segment at 671 to 697 is disordered; sequence PPSQVVRTTPRGGADTDTVGPRIQPSN.

The protein belongs to the D-(-)-3-hydroxybutyrate oligomer hydrolase family.

The protein localises to the secreted. It carries out the reaction (3R)-hydroxybutanoate dimer + H2O = 2 (R)-3-hydroxybutanoate + H(+). The protein operates within lipid metabolism; butanoate metabolism. Functionally, participates in the degradation of poly-3-hydroxybutyrate (PHB). It works downstream of poly(3-hydroxybutyrate) depolymerase, hydrolyzing D(-)-3-hydroxybutyrate oligomers of various length (3HB-oligomers) into 3HB-monomers. This Cupriavidus metallidurans (strain ATCC 43123 / DSM 2839 / NBRC 102507 / CH34) (Ralstonia metallidurans) protein is D-(-)-3-hydroxybutyrate oligomer hydrolase.